The sequence spans 374 residues: Chaperone protein DnaJ (374 aa).

In terms of domain architecture, J spans Asp5–Gly70. A CR-type zinc finger spans residues Gly133–Ser211. Zn(2+)-binding residues include Cys146, Cys149, Cys163, Cys166, Cys185, Cys188, Cys199, and Cys202. CXXCXGXG motif repeat units follow at residues Cys146–Gly153, Cys163–Gly170, Cys185–Gly192, and Cys199–Gly206.

Belongs to the DnaJ family. Homodimer. The cofactor is Zn(2+).

The protein localises to the cytoplasm. Functionally, participates actively in the response to hyperosmotic and heat shock by preventing the aggregation of stress-denatured proteins and by disaggregating proteins, also in an autonomous, DnaK-independent fashion. Unfolded proteins bind initially to DnaJ; upon interaction with the DnaJ-bound protein, DnaK hydrolyzes its bound ATP, resulting in the formation of a stable complex. GrpE releases ADP from DnaK; ATP binding to DnaK triggers the release of the substrate protein, thus completing the reaction cycle. Several rounds of ATP-dependent interactions between DnaJ, DnaK and GrpE are required for fully efficient folding. Also involved, together with DnaK and GrpE, in the DNA replication of plasmids through activation of initiation proteins. The chain is Chaperone protein DnaJ from Psychrobacter arcticus (strain DSM 17307 / VKM B-2377 / 273-4).